Reading from the N-terminus, the 152-residue chain is Transcriptional regulator MraZ (152 aa).

2 consecutive SpoVT-AbrB domains span residues 5 to 52 and 81 to 124; these read ASAI…PFDE and AHEC…DETA.

This sequence belongs to the MraZ family. Forms oligomers.

The protein localises to the cytoplasm. The protein resides in the nucleoid. The protein is Transcriptional regulator MraZ of Shewanella sediminis (strain HAW-EB3).